We begin with the raw amino-acid sequence, 306 residues long: Pantothenate kinase (306 aa).

91–98 (GSVAVGKS) is an ATP binding site.

The protein belongs to the prokaryotic pantothenate kinase family.

The protein localises to the cytoplasm. It catalyses the reaction (R)-pantothenate + ATP = (R)-4'-phosphopantothenate + ADP + H(+). The protein operates within cofactor biosynthesis; coenzyme A biosynthesis; CoA from (R)-pantothenate: step 1/5. This is Pantothenate kinase from Streptococcus agalactiae serotype Ia (strain ATCC 27591 / A909 / CDC SS700).